A 389-amino-acid chain; its full sequence is Acetoin utilization protein AcuC (389 aa).

It belongs to the histone deacetylase family.

Its pathway is ketone degradation; acetoin degradation. Role in growth on acetoin or butanediol. Involved in the breakdown of these compounds used as a carbon source. The chain is Acetoin utilization protein AcuC (acuC) from Staphylococcus aureus (strain MRSA252).